Consider the following 494-residue polypeptide: Aspartyl/glutamyl-tRNA(Asn/Gln) amidotransferase subunit B (494 aa).

It belongs to the GatB/GatE family. GatB subfamily. Heterotrimer of A, B and C subunits.

The catalysed reaction is L-glutamyl-tRNA(Gln) + L-glutamine + ATP + H2O = L-glutaminyl-tRNA(Gln) + L-glutamate + ADP + phosphate + H(+). It catalyses the reaction L-aspartyl-tRNA(Asn) + L-glutamine + ATP + H2O = L-asparaginyl-tRNA(Asn) + L-glutamate + ADP + phosphate + 2 H(+). Allows the formation of correctly charged Asn-tRNA(Asn) or Gln-tRNA(Gln) through the transamidation of misacylated Asp-tRNA(Asn) or Glu-tRNA(Gln) in organisms which lack either or both of asparaginyl-tRNA or glutaminyl-tRNA synthetases. The reaction takes place in the presence of glutamine and ATP through an activated phospho-Asp-tRNA(Asn) or phospho-Glu-tRNA(Gln). The sequence is that of Aspartyl/glutamyl-tRNA(Asn/Gln) amidotransferase subunit B from Rhodopseudomonas palustris (strain BisB18).